A 367-amino-acid polypeptide reads, in one-letter code: Developmentally-regulated GTP-binding protein 1 (367 aa).

The segment at 2 to 16 (SGTLARIAEIEAEMA) is required for interaction with STK16. Residues 65-290 (ARIGFVGFPS…LLEKIWDYLQ (226 aa)) form the OBG-type G domain. GTP is bound by residues 71–78 (GFPSVGKS), 96–100 (FTTLT), 117–120 (DLPG), 248–251 (NKID), and 271–273 (SAH). Mg(2+) contacts are provided by S78 and T98. Residues 290–366 (QLVRIYTKPK…EDEDVIQIVK (77 aa)) form the TGS domain.

It belongs to the TRAFAC class OBG-HflX-like GTPase superfamily. OBG GTPase family. Requires Mg(2+) as cofactor. It depends on K(+) as a cofactor. In terms of tissue distribution, expressed in many adult amd embryonic tissues. In adults, highest levels in ovaries and testes, followed by skeletal muscle, stomach, brain, kidney and liver. Weak expression in heart and brain.

It is found in the nucleus. The protein resides in the cytoplasm. The catalysed reaction is GTP + H2O = GDP + phosphate + H(+). Catalyzes the conversion of GTP to GDP through hydrolysis of the gamma-phosphate bond in GTP. Binds to microtubules and promotes microtubule polymerization and bundling. GTPase activity is not necessary for these microtubule-related functions. In Xenopus laevis (African clawed frog), this protein is Developmentally-regulated GTP-binding protein 1 (drg1).